Here is a 144-residue protein sequence, read N- to C-terminus: Large ribosomal subunit protein uL15 (144 aa).

Residues 1-12 (MRLNTLSPSLGS) are compositionally biased toward polar residues. Positions 1-51 (MRLNTLSPSLGSRKNHKRLGRGIGSGFGKTAGRGHKGQKSRSGGHVNRGFE) are disordered. Residues 21–31 (RGIGSGFGKTA) show a composition bias toward gly residues.

Belongs to the universal ribosomal protein uL15 family. As to quaternary structure, part of the 50S ribosomal subunit.

Binds to the 23S rRNA. This Buchnera aphidicola subsp. Schizaphis graminum (strain Sg) protein is Large ribosomal subunit protein uL15.